A 982-amino-acid chain; its full sequence is Protein cramped (982 aa).

Disordered regions lie at residues 1–37 (MEELSKQPPPPPLTQPPPPSSSVSIEEPLPNGKGGGA), 71–111 (QKMK…GSGK), 323–349 (SLPSAASNNNNNNNETEPLQPSVASLD), 407–456 (NKRL…SSGD), and 822–851 (GTSSAGISTSGSKPDCSMNAMTASQDQEPG). Pro residues predominate over residues 7–20 (QPPPPPLTQPPPPS). Residues 21-30 (SSVSIEEPLP) show a composition bias toward low complexity. Residues 86 to 98 (SEREPNKKEEKAA) show a composition bias toward basic and acidic residues. Polar residues predominate over residues 100–111 (KTPSQLKTGSGK). Residues 109 to 173 (SGKTTWTNVE…HYYQTHHKIC (65 aa)) enclose the SANT domain. Residues 410 to 425 (LRTESGSEKRSPETKK) are compositionally biased toward basic and acidic residues. A phosphoserine mark is found at Ser-431 and Ser-437. A compositionally biased stretch (low complexity) spans 822–833 (GTSSAGISTSGS).

Belongs to the cramped family. In terms of tissue distribution, ubiquitously expressed throughout embryonic development. High expression is detected in CNS and gonads.

The protein resides in the nucleus. In terms of biological role, polycomb group (Pc-G) genes are needed to maintain expression patterns of the homeotic selector genes of the Antennapedia (Antp-C) and Bithorax (Bx-C) complexes, and hence for the maintenance of segmental determination. Can act as a modifier of position effect variegation (PEV). The sequence is that of Protein cramped (crm) from Drosophila melanogaster (Fruit fly).